The chain runs to 1894 residues: 1,3-beta-glucan synthase component bgs2 (1894 aa).

Disordered regions lie at residues 1-53 and 282-310; these read MSWH…DSNK and GPKI…PETS. A compositionally biased stretch (polar residues) spans 32-51; the sequence is EFNNPGEESTYPQANSWNDS. The span at 286 to 296 shows a compositional bias: basic residues; that stretch reads KQAKKKQKRKS. The next 16 helical transmembrane spans lie at 530–550, 566–586, 600–620, 655–675, 710–730, 731–751, 1338–1358, 1394–1414, 1476–1498, 1503–1525, 1598–1618, 1637–1657, 1673–1693, 1697–1717, 1778–1798, and 1837–1857; these read VSLG…FEWI, FLIL…VFGF, VAIV…LVPL, VSWG…YFFL, ILLG…TYLW, YILV…ISIW, IFIM…GGMY, CIIS…VQEL, LLFS…MLLF, VWIP…PFIF, FTEI…YFFI, ILIL…TFAG, FGAV…IIVF, WYLE…IIAI, DFFL…IPFI, and TMFF…LVVA.

The protein belongs to the glycosyltransferase 48 family. In terms of assembly, component of the 1,3-beta-glucan synthase (GS) complex, composed of at least the alternate catalytic subunits bgs1, bgs2, bgs3, and bgs4, and a regulatory subunit chr4.

The protein localises to the prospore membrane. It catalyses the reaction [(1-&gt;3)-beta-D-glucosyl](n) + UDP-alpha-D-glucose = [(1-&gt;3)-beta-D-glucosyl](n+1) + UDP + H(+). In terms of biological role, alternate catalytic subunit of the 1,3-beta-glucan synthase (GS) complex. Synthesizes 1,3-beta-glucan, a major structural component of the yeast cell wall. Has a role in ascospore development where it is required for the assembly of a functional spore wall. This is 1,3-beta-glucan synthase component bgs2 from Schizosaccharomyces pombe (strain 972 / ATCC 24843) (Fission yeast).